A 164-amino-acid chain; its full sequence is Transcription elongation factor GreA (164 aa).

The stretch at 12–38 (RRLERELERLKKERPGVILAIKEAREE) forms a coiled coil.

This sequence belongs to the GreA/GreB family.

In terms of biological role, necessary for efficient RNA polymerase transcription elongation past template-encoded arresting sites. The arresting sites in DNA have the property of trapping a certain fraction of elongating RNA polymerases that pass through, resulting in locked ternary complexes. Cleavage of the nascent transcript by cleavage factors such as GreA or GreB allows the resumption of elongation from the new 3'terminus. GreA releases sequences of 2 to 3 nucleotides. This chain is Transcription elongation factor GreA, found in Solidesulfovibrio magneticus (strain ATCC 700980 / DSM 13731 / RS-1) (Desulfovibrio magneticus).